The chain runs to 110 residues: Waprin-Thr1 (110 aa).

The N-terminal stretch at 1-20 (MYKKGTILVLAYLLIATAVC) is a signal peptide. A WAP domain is found at 22 to 68 (LSYKEGHCPLRNSVSKCIPRCVSDYQCSFNEKCCPNKCGSESCVQAS). Disulfide bonds link Cys29–Cys55, Cys38–Cys59, Cys42–Cys54, and Cys48–Cys64.

This sequence belongs to the venom waprin family. Cys-rich waprin subfamily. In terms of tissue distribution, expressed by the venom gland.

The protein localises to the secreted. Its function is as follows. Antimicrobial peptides with activity against Gram-positive and Gram-negative bacteria as well as fungi. Recognizes carbohydrates in the microbial cell walls, and induces structural damage to them. Also inhibits microbial serine proteases subtilisin A and proteinase K, as well as human and porcine elastases. Carbohydrates that are recognized are LPS, mannan, peptidoglycan, and N-acetl-D-glucosamine. The protein is Waprin-Thr1 of Apis mellifera (Honeybee).